The sequence spans 528 residues: MADPQATNGTGAACAERDASDVGDARDEGAGRVVAVRGAVIDVAFDGGALPALNEALTIPVDGAAPILAEVHAHLSDAAVRALALGPTGGLRRGAAVRATGGPIRVPVGDAVLGRLLSVTGAPGDDGAALAADVERRPIHRGAPLLAEQKSANALFATGIKVIDLLAPLAQGGKAAMFGGAGVGKTVLVMELIHAMVERYRGISVFAGIGERSREGHEMLLDMRGSGVLGRTVLVYGQMNEPPGARWRVPLTALAIAEYFRDERAQNVLLLMDNVFRFVQAGAEVSGLLGRLPSRVGYQPTLASEVAALQERIASVEGAAVTAIEAVYVPADDFTDPAVTAIAAHVDSMVVLSRAMAAEGMYPAIDPVASSSILLDPLVVGEAHVEVAIEVRRVIEHYRELQDVIALLGIDELGADDRRLVGRARRLQRFLTQPFAVTEAFTGQAGASVEIADTIAGCRAILRGDCDDWRESSLYMVGTLDDARRKEAAAREADARREAAAAASGAGPGTTSDPASGSAEPQGARHGR.

A compositionally biased stretch (polar residues) spans 1–10 (MADPQATNGT). A disordered region spans residues 1–27 (MADPQATNGTGAACAERDASDVGDARD). The segment covering 15–27 (AERDASDVGDARD) has biased composition (basic and acidic residues). ATP is bound at residue 179-186 (GGAGVGKT). A compositionally biased stretch (basic and acidic residues) spans 488 to 499 (AAAREADARREA). A disordered region spans residues 488–528 (AAAREADARREAAAAASGAGPGTTSDPASGSAEPQGARHGR).

It belongs to the ATPase alpha/beta chains family. In terms of assembly, F-type ATPases have 2 components, CF(1) - the catalytic core - and CF(0) - the membrane proton channel. CF(1) has five subunits: alpha(3), beta(3), gamma(1), delta(1), epsilon(1). CF(0) has three main subunits: a(1), b(2) and c(9-12). The alpha and beta chains form an alternating ring which encloses part of the gamma chain. CF(1) is attached to CF(0) by a central stalk formed by the gamma and epsilon chains, while a peripheral stalk is formed by the delta and b chains.

The protein resides in the cell inner membrane. The catalysed reaction is ATP + H2O + 4 H(+)(in) = ADP + phosphate + 5 H(+)(out). Its function is as follows. Produces ATP from ADP in the presence of a proton gradient across the membrane. The catalytic sites are hosted primarily by the beta subunits. The polypeptide is ATP synthase subunit beta 2 (Burkholderia pseudomallei (strain 1106a)).